Consider the following 59-residue polypeptide: uncharacterized protein (59 aa).

This is an uncharacterized protein from Acidianus hospitalis (AFV-1).